Here is a 629-residue protein sequence, read N- to C-terminus: 1-deoxy-D-xylulose-5-phosphate synthase (629 aa).

Thiamine diphosphate-binding positions include H79 and 119 to 121; that span reads SHA. D150 is a binding site for Mg(2+). Thiamine diphosphate contacts are provided by residues 151–152, N180, Y292, and E377; that span reads GS. N180 is a binding site for Mg(2+).

This sequence belongs to the transketolase family. DXPS subfamily. Homodimer. The cofactor is Mg(2+). It depends on thiamine diphosphate as a cofactor.

It catalyses the reaction D-glyceraldehyde 3-phosphate + pyruvate + H(+) = 1-deoxy-D-xylulose 5-phosphate + CO2. It participates in metabolic intermediate biosynthesis; 1-deoxy-D-xylulose 5-phosphate biosynthesis; 1-deoxy-D-xylulose 5-phosphate from D-glyceraldehyde 3-phosphate and pyruvate: step 1/1. Catalyzes the acyloin condensation reaction between C atoms 2 and 3 of pyruvate and glyceraldehyde 3-phosphate to yield 1-deoxy-D-xylulose-5-phosphate (DXP). The polypeptide is 1-deoxy-D-xylulose-5-phosphate synthase (Tropheryma whipplei (strain TW08/27) (Whipple's bacillus)).